A 203-amino-acid chain; its full sequence is Ribosome-binding factor A (203 aa).

A compositionally biased stretch (basic and acidic residues) spans 119 to 141 (LAEVRRDARPAGDEDPYRRPRTV). The interval 119 to 203 (LAEVRRDARP…SPGGDPTAGR (85 aa)) is disordered. Positions 142-169 (DEDDEDEDEDLVDEFDEFDRVEELDADA) are enriched in acidic residues.

This sequence belongs to the RbfA family. Monomer. Binds 30S ribosomal subunits, but not 50S ribosomal subunits or 70S ribosomes.

Its subcellular location is the cytoplasm. Functionally, one of several proteins that assist in the late maturation steps of the functional core of the 30S ribosomal subunit. Associates with free 30S ribosomal subunits (but not with 30S subunits that are part of 70S ribosomes or polysomes). Required for efficient processing of 16S rRNA. May interact with the 5'-terminal helix region of 16S rRNA. The sequence is that of Ribosome-binding factor A from Frankia alni (strain DSM 45986 / CECT 9034 / ACN14a).